The sequence spans 376 residues: Phosphate-binding protein (376 aa).

2 disulfide bridges follow: Cys-113–Cys-158 and Cys-306–Cys-369.

As to quaternary structure, heterooligomer with human PON1. As to expression, found in human plasma.

The protein resides in the secreted. Functionally, phosphate-binding protein. The polypeptide is Phosphate-binding protein (Unknown prokaryotic organism).